The primary structure comprises 120 residues: Ribosome-binding factor A (120 aa).

This sequence belongs to the RbfA family. In terms of assembly, monomer. Binds 30S ribosomal subunits, but not 50S ribosomal subunits or 70S ribosomes.

It is found in the cytoplasm. In terms of biological role, one of several proteins that assist in the late maturation steps of the functional core of the 30S ribosomal subunit. Associates with free 30S ribosomal subunits (but not with 30S subunits that are part of 70S ribosomes or polysomes). Required for efficient processing of 16S rRNA. May interact with the 5'-terminal helix region of 16S rRNA. This chain is Ribosome-binding factor A, found in Chlamydia abortus (strain DSM 27085 / S26/3) (Chlamydophila abortus).